The primary structure comprises 414 residues: Na(+)-translocating NADH-quinone reductase subunit B (414 aa).

4 consecutive transmembrane segments (helical) span residues 23 to 40 (WFAL…PGLV), 56 to 76 (IMIM…YNAG), 129 to 149 (FLPI…LFCM), and 164 to 184 (ILFA…LGIT). At Thr-236 the chain carries FMN phosphoryl threonine. The next 5 helical transmembrane spans lie at 268-288 (IPGS…AMIV), 297-317 (IIAG…VVGS), 325-345 (MPWH…FMAT), 358-378 (WWYG…NPAY), and 381-401 (GMML…HVVI).

It belongs to the NqrB/RnfD family. As to quaternary structure, composed of six subunits; NqrA, NqrB, NqrC, NqrD, NqrE and NqrF. The cofactor is FMN.

Its subcellular location is the cell inner membrane. It carries out the reaction a ubiquinone + n Na(+)(in) + NADH + H(+) = a ubiquinol + n Na(+)(out) + NAD(+). Functionally, NQR complex catalyzes the reduction of ubiquinone-1 to ubiquinol by two successive reactions, coupled with the transport of Na(+) ions from the cytoplasm to the periplasm. NqrA to NqrE are probably involved in the second step, the conversion of ubisemiquinone to ubiquinol. This is Na(+)-translocating NADH-quinone reductase subunit B from Vibrio parahaemolyticus serotype O3:K6 (strain RIMD 2210633).